The following is a 596-amino-acid chain: 3-hydroxy-3-methylglutaryl-coenzyme A reductase 1 (596 aa).

Residues 1–29 form a disordered region; it reads MDVRRRPVKPLYTSKDASAGEPLKQQEVS. A run of 2 helical transmembrane segments spans residues 41-61 and 83-103; these read LYLTNGLFFTMFFSVMYFLLV and AMVSLIASVIYLLGFFGIGFV. The tract at residues 104–183 is linker; the sequence is QSFVSRSNSD…SPIIMPALSE (80 aa). A catalytic region spans residues 184–596; that stretch reads DDEEIIQSVV…YNRSIKDISK (413 aa). Glutamate 278 serves as the catalytic Charge relay system. N-linked (GlcNAc...) asparagine glycosylation is present at asparagine 342. Lysine 410 (charge relay system) is an active-site residue. Asparagine 455 carries N-linked (GlcNAc...) asparagine glycosylation. The Charge relay system role is filled by aspartate 486. The Proton donor role is filled by histidine 584. Asparagine 588 is a glycosylation site (N-linked (GlcNAc...) asparagine).

This sequence belongs to the HMG-CoA reductase family. In terms of tissue distribution, expressed in flower primordia and anthers.

It localises to the endoplasmic reticulum membrane. It catalyses the reaction (R)-mevalonate + 2 NADP(+) + CoA = (3S)-3-hydroxy-3-methylglutaryl-CoA + 2 NADPH + 2 H(+). It participates in metabolic intermediate biosynthesis; (R)-mevalonate biosynthesis; (R)-mevalonate from acetyl-CoA: step 3/3. In terms of biological role, catalyzes the synthesis of mevalonate. The specific precursor of all isoprenoid compounds present in plants. This chain is 3-hydroxy-3-methylglutaryl-coenzyme A reductase 1 (HMG1), found in Solanum tuberosum (Potato).